The primary structure comprises 295 residues: Carbapenem-hydrolyzing beta-lactamase transcriptional activator (295 aa).

The HTH lysR-type domain occupies 5-62; it reads LPLNALRAFEASARYLNFTKAGLELHVSQAAVSQQVRTLEQMLGVALFTRVPRGLQLT. Residues 22–41 constitute a DNA-binding region (H-T-H motif); sequence FTKAGLELHVSQAAVSQQVR.

This sequence belongs to the LysR transcriptional regulatory family.

In terms of biological role, this protein is a positive regulator of gene expression of carbapenem-hydrolyzing beta-lactamase (NmcA). The polypeptide is Carbapenem-hydrolyzing beta-lactamase transcriptional activator (nmcR) (Enterobacter cloacae).